A 197-amino-acid chain; its full sequence is Phosphoheptose isomerase (197 aa).

Residues 36-197 (MVNALLNEGK…IDSQLFGSEE (162 aa)) enclose the SIS domain. Residue 51–53 (NGG) participates in substrate binding. Positions 60 and 64 each coordinate Zn(2+). Substrate-binding positions include Glu64, 93-94 (ND), 119-121 (STS), Ser124, and Gln174. Residues Gln174 and His182 each coordinate Zn(2+).

The protein belongs to the SIS family. GmhA subfamily. As to quaternary structure, homotetramer. It depends on Zn(2+) as a cofactor.

The protein resides in the cytoplasm. It carries out the reaction 2 D-sedoheptulose 7-phosphate = D-glycero-alpha-D-manno-heptose 7-phosphate + D-glycero-beta-D-manno-heptose 7-phosphate. The protein operates within carbohydrate biosynthesis; D-glycero-D-manno-heptose 7-phosphate biosynthesis; D-glycero-alpha-D-manno-heptose 7-phosphate and D-glycero-beta-D-manno-heptose 7-phosphate from sedoheptulose 7-phosphate: step 1/1. Catalyzes the isomerization of sedoheptulose 7-phosphate in D-glycero-D-manno-heptose 7-phosphate. The protein is Phosphoheptose isomerase of Pseudomonas fluorescens (strain Pf0-1).